Reading from the N-terminus, the 1368-residue chain is DNA-directed RNA polymerase subunit beta (1368 aa).

It belongs to the RNA polymerase beta chain family. The RNAP catalytic core consists of 2 alpha, 1 beta, 1 beta' and 1 omega subunit. When a sigma factor is associated with the core the holoenzyme is formed, which can initiate transcription.

The catalysed reaction is RNA(n) + a ribonucleoside 5'-triphosphate = RNA(n+1) + diphosphate. DNA-dependent RNA polymerase catalyzes the transcription of DNA into RNA using the four ribonucleoside triphosphates as substrates. The chain is DNA-directed RNA polymerase subunit beta from Burkholderia thailandensis (strain ATCC 700388 / DSM 13276 / CCUG 48851 / CIP 106301 / E264).